The primary structure comprises 180 residues: MANALKEKYVNEVQPALIEKFNFTSPMQAPKIDKIVLNMGVGDAVSNSKNLDEAVEELKLIAGQQPVITKAKKSIAGFRLREGMSIGTKVTLRGARMYEFLDKLINISLPRVRDFRGVSSKAFDGRGNYTLGIREQLIFPEIDFDQVNRVRGLDIVVVTTAQNDEEGRELLTLLGMPFAK.

Belongs to the universal ribosomal protein uL5 family. Part of the 50S ribosomal subunit; part of the 5S rRNA/L5/L18/L25 subcomplex. Contacts the 5S rRNA and the P site tRNA. Forms a bridge to the 30S subunit in the 70S ribosome.

In terms of biological role, this is one of the proteins that bind and probably mediate the attachment of the 5S RNA into the large ribosomal subunit, where it forms part of the central protuberance. In the 70S ribosome it contacts protein S13 of the 30S subunit (bridge B1b), connecting the 2 subunits; this bridge is implicated in subunit movement. Contacts the P site tRNA; the 5S rRNA and some of its associated proteins might help stabilize positioning of ribosome-bound tRNAs. In Leuconostoc citreum (strain KM20), this protein is Large ribosomal subunit protein uL5.